A 406-amino-acid chain; its full sequence is Vacuole membrane protein 1 (406 aa).

Over residues 1–20 (MAENGKNCDQRRVAMNKEQH) the composition is skewed to basic and acidic residues. Positions 1-36 (MAENGKNCDQRRVAMNKEQHNGNFTDPSSVNEKKRR) are disordered. Position 2 is an N-acetylalanine (A2). The Cytoplasmic portion of the chain corresponds to 2-43 (AENGKNCDQRRVAMNKEQHNGNFTDPSSVNEKKRREREERQN). Polar residues predominate over residues 21 to 30 (NGNFTDPSSV). A helical membrane pass occupies residues 44 to 64 (IVLWRQPLITLQYFSLEILVI). The Extracellular segment spans residues 65–77 (LKEWTSKLWHRQS). Residues 78 to 98 (IVVSFLLLLAVLIATYYVEGA) form a helical membrane-spanning segment. Over 99-109 (HQQYVQRIEKQ) the chain is Cytoplasmic. The helical transmembrane segment at 110–130 (FLLYAYWIGLGILSSVGLGTG) threads the bilayer. Over 131-250 (LHTFLLYLGP…ASRAKLAVQK (120 aa)) the chain is Extracellular. Positions 173–316 (GTEGTISLWS…FVIITFSKHI (144 aa)) are VTT domain. A helical membrane pass occupies residues 251 to 271 (LVQKVGFFGILACASIPNPLF). Residues 272–273 (DL) lie on the Cytoplasmic side of the membrane. A helical membrane pass occupies residues 274-294 (AGITCGHFLVPFWTFFGATLI). The Extracellular portion of the chain corresponds to 295 to 305 (GKAIIKMHIQK). A helical transmembrane segment spans residues 306–326 (IFVIITFSKHIVEQMVAFIGA). At 327–363 (VPGIGPSLQKPFQEYLEAQRQKLHHKSEMGTPQGENW) the chain is on the cytoplasmic side. The helical transmembrane segment at 364–384 (LSWMFEKLVVVMVCYFILSII) threads the bilayer. Topologically, residues 385 to 406 (NSMAQSYAKRIQQRLNSEEKTK) are extracellular.

Belongs to the VMP1 family. As to quaternary structure, interacts with BECN1. Interacts with TJP1. Interacts with TP53INP2. Interacts with TMEM41B. Interacts with ATP2A2, PLN and SLN; competes with PLN and SLN to prevent them from forming an inhibitory complex with ATP2A2. Interacts with ATG2A.

It localises to the endoplasmic reticulum-Golgi intermediate compartment membrane. The protein resides in the cell membrane. Its subcellular location is the vacuole membrane. It is found in the endoplasmic reticulum membrane. The catalysed reaction is a 1,2-diacyl-sn-glycero-3-phospho-L-serine(in) = a 1,2-diacyl-sn-glycero-3-phospho-L-serine(out). It carries out the reaction cholesterol(in) = cholesterol(out). The enzyme catalyses a 1,2-diacyl-sn-glycero-3-phosphocholine(in) = a 1,2-diacyl-sn-glycero-3-phosphocholine(out). It catalyses the reaction a 1,2-diacyl-sn-glycero-3-phosphoethanolamine(in) = a 1,2-diacyl-sn-glycero-3-phosphoethanolamine(out). Functionally, phospholipid scramblase involved in lipid homeostasis and membrane dynamics processes. Has phospholipid scramblase activity toward cholesterol and phosphatidylserine, as well as phosphatidylethanolamine and phosphatidylcholine. Required for autophagosome formation: participates in early stages of autophagosome biogenesis at the endoplasmic reticulum (ER) membrane by reequilibrating the leaflets of the ER as lipids are extracted by ATG2 (ATG2A or ATG2B) to mediate autophagosome assembly. Regulates ATP2A2 activity to control ER-isolation membrane contacts for autophagosome formation. In addition to autophagy, involved in other processes in which phospholipid scramblase activity is required. Modulates ER contacts with lipid droplets, mitochondria and endosomes. Plays an essential role in formation of cell junctions. Upon stress such as bacterial and viral infection, promotes formation of cytoplasmic vacuoles followed by cell death. Involved in the cytoplasmic vacuolization of acinar cells during the early stage of acute pancreatitis. The sequence is that of Vacuole membrane protein 1 from Pongo abelii (Sumatran orangutan).